The following is a 42-amino-acid chain: Pelovaterin (42 aa).

3 disulfides stabilise this stretch: Cys8–Cys38, Cys16–Cys32, and Cys24–Cys39.

Its subcellular location is the secreted. It localises to the extracellular space. It is found in the extracellular matrix. Its function is as follows. Induces the nucleation and stabilization of vaterite, one of the crystalline polymorphs of calcium carbonate. Exhibits strong antimicrobial activity against Pseudomonas aeruginosa and Proteus vulgaris. This Pelodiscus sinensis (Chinese softshell turtle) protein is Pelovaterin.